A 409-amino-acid polypeptide reads, in one-letter code: Putative competence-damage inducible protein (409 aa).

This sequence belongs to the CinA family.

This chain is Putative competence-damage inducible protein, found in Clostridium botulinum (strain 657 / Type Ba4).